A 208-amino-acid polypeptide reads, in one-letter code: 3-demethoxyubiquinol 3-hydroxylase (208 aa).

Fe cation is bound by residues E57, E87, H90, E139, E171, and H174.

This sequence belongs to the COQ7 family. Requires Fe cation as cofactor.

It is found in the cell membrane. The catalysed reaction is a 5-methoxy-2-methyl-3-(all-trans-polyprenyl)benzene-1,4-diol + AH2 + O2 = a 3-demethylubiquinol + A + H2O. The protein operates within cofactor biosynthesis; ubiquinone biosynthesis. Its function is as follows. Catalyzes the hydroxylation of 2-nonaprenyl-3-methyl-6-methoxy-1,4-benzoquinol during ubiquinone biosynthesis. The chain is 3-demethoxyubiquinol 3-hydroxylase from Burkholderia mallei (strain NCTC 10229).